The following is a 637-amino-acid chain: Phosphomethylpyrimidine synthase (637 aa).

Residues asparagine 242, methionine 271, tyrosine 300, histidine 336, 356–358 (SRG), 397–400 (DGLR), and glutamate 436 each bind substrate. A Zn(2+)-binding site is contributed by histidine 440. Tyrosine 463 contributes to the substrate binding site. Residue histidine 504 participates in Zn(2+) binding. 3 residues coordinate [4Fe-4S] cluster: cysteine 584, cysteine 587, and cysteine 592.

It belongs to the ThiC family. As to quaternary structure, homodimer. [4Fe-4S] cluster serves as cofactor.

It carries out the reaction 5-amino-1-(5-phospho-beta-D-ribosyl)imidazole + S-adenosyl-L-methionine = 4-amino-2-methyl-5-(phosphooxymethyl)pyrimidine + CO + 5'-deoxyadenosine + formate + L-methionine + 3 H(+). The protein operates within cofactor biosynthesis; thiamine diphosphate biosynthesis. Its function is as follows. Catalyzes the synthesis of the hydroxymethylpyrimidine phosphate (HMP-P) moiety of thiamine from aminoimidazole ribotide (AIR) in a radical S-adenosyl-L-methionine (SAM)-dependent reaction. This Herminiimonas arsenicoxydans protein is Phosphomethylpyrimidine synthase.